The primary structure comprises 57 residues: Large ribosomal subunit protein bL32 (57 aa).

Residues 1-25 (MATPSNKNSKSHKRNRRGHIGLNVP) are disordered. Over residues 9 to 19 (SKSHKRNRRGH) the composition is skewed to basic residues.

It belongs to the bacterial ribosomal protein bL32 family.

In Leuconostoc mesenteroides subsp. mesenteroides (strain ATCC 8293 / DSM 20343 / BCRC 11652 / CCM 1803 / JCM 6124 / NCDO 523 / NBRC 100496 / NCIMB 8023 / NCTC 12954 / NRRL B-1118 / 37Y), this protein is Large ribosomal subunit protein bL32.